Consider the following 284-residue polypeptide: Protein Ku (284 aa).

The 180-residue stretch at 10-189 folds into the Ku domain; sequence TIGLVTVPVK…ELRSTEGIVP (180 aa).

Homodimer. Interacts with host LigD.

Its function is as follows. Required for replication of viruses with short cos ends (4 bases). Stimulates dsDNA end-joining by host LigD. Binds dsDNA with either blunt, 5'- or 3-overhangs, protecting it from host exonuclease degradation. In Mycobacterium phage Corndog (Mycobacteriophage Corndog), this protein is Protein Ku (87).